The following is a 462-amino-acid chain: NAD-capped RNA hydrolase NUDT12 (462 aa).

ANK repeat units follow at residues 11-40 (EIVT…SLLN), 45-74 (NGWT…DRSI), and 78-98 (SRQT…ANLL). The residue at position 185 (lysine 185) is an N6-succinyllysine. Zn(2+) is bound by residues cysteine 284 and cysteine 287. Lysine 292 carries the N6-succinyllysine modification. Residues cysteine 302 and cysteine 307 each coordinate Zn(2+). Substrate contacts are provided by residues tyrosine 318, 354–356 (AGF), glutamate 370, glutamate 374, and glutamate 415. Residues 319–453 (PRVDPVVIMQ…SRAIAHQLIK (135 aa)) form the Nudix hydrolase domain. Mg(2+) contacts are provided by alanine 354, glutamate 370, glutamate 374, and glutamate 415. Residues 355-376 (GFIEPGETIEDAVRREVEEESG) carry the Nudix box motif. The short motif at 460–462 (PNL) is the Microbody targeting signal element.

The protein belongs to the Nudix hydrolase family. NudC subfamily. Homodimer. Homodimerization is essential for its catalytic activity and protein stability. Interacts (via ANK repeats) with BLMH. Mg(2+) serves as cofactor. It depends on Zn(2+) as a cofactor.

The protein localises to the cytoplasm. Its subcellular location is the peroxisome. The protein resides in the cytoplasmic granule. It catalyses the reaction a 5'-end NAD(+)-phospho-ribonucleoside in mRNA + H2O = a 5'-end phospho-adenosine-phospho-ribonucleoside in mRNA + beta-nicotinamide D-ribonucleotide + 2 H(+). It carries out the reaction NAD(+) + H2O = beta-nicotinamide D-ribonucleotide + AMP + 2 H(+). The enzyme catalyses NADH + H2O = reduced beta-nicotinamide D-ribonucleotide + AMP + 2 H(+). The catalysed reaction is NADPH + H2O = reduced beta-nicotinamide D-ribonucleotide + adenosine 2',5'-bisphosphate + 2 H(+). MRNA decapping enzyme that specifically removes the nicotinamide adenine dinucleotide (NAD) cap from a subset of mRNAs by hydrolyzing the diphosphate linkage to produce nicotinamide mononucleotide (NMN) and 5' monophosphate mRNA. The NAD-cap is present at the 5'-end of some RNAs; in contrast to the canonical N7 methylguanosine (m7G) cap, the NAD cap promotes mRNA decay. Preferentially acts on NAD-capped transcripts in response to nutrient stress. Also acts on free nicotinamide adenine dinucleotide molecules: hydrolyzes NAD(H) into NMN(H) and AMP, and NADPH into NMNH and 2',5'-ADP. May act to regulate the concentration of peroxisomal nicotinamide nucleotide cofactors required for oxidative metabolism in this organelle. Regulates the levels of circadian clock components PER1, PER2, PER3 and CRY2 in the liver. The polypeptide is NAD-capped RNA hydrolase NUDT12 (Macaca fascicularis (Crab-eating macaque)).